The sequence spans 454 residues: G-protein coupled receptor 39 (454 aa).

The Extracellular portion of the chain corresponds to 1–34 (MASPSHPSRDCSQVIDHSHVPEFEVATWIKITLI). Disulfide bonds link Cys11–Cys191 and Cys108–Cys210. Residues His17 and His19 each contribute to the Zn(2+) site. The helical transmembrane segment at 35–55 (LVYLVIFVVGILGNSVTIRVT) threads the bilayer. At 56–69 (QVLQKKGYLQKEVT) the chain is on the cytoplasmic side. The chain crosses the membrane as a helical span at residues 70–89 (DHMVSLACSDILVFLIGMPM). Topologically, residues 90–109 (EFYSIIWNPLTTPSYTVSCK) are extracellular. The chain crosses the membrane as a helical span at residues 110-131 (VHTFLFEACSYATLLHVLTLSF). Residues 132–151 (ERYIAICHPFRYKAMSGPCQ) lie on the Cytoplasmic side of the membrane. Residues 152–172 (VKLLIGFVWVTSALVALPLLF) form a helical membrane-spanning segment. The Extracellular segment spans residues 173-217 (AMGVEYPLVNVPSHRGLICNRSRTRHQEQPESSNMSICTNLSSRW). N-linked (GlcNAc...) asparagine glycosylation is found at Asn192, Asn206, and Asn212. A helical membrane pass occupies residues 218–242 (TVFQSSIFSAFVVYLVVLVSVAFMC). Over 243–283 (WSMMQVLRRSKQGTLAAQGQQLQLRKLESQESRSARRQTII) the chain is Cytoplasmic. The helical transmembrane segment at 284–305 (FLELIVVTLAVCWMPNQVRRIM) threads the bilayer. Topologically, residues 306–323 (AAAKPKHDWTKSYFRAYM) are extracellular. Residues 324–344 (ILLPFSDTFFYLSSVVNPLLY) traverse the membrane as a helical segment. Topologically, residues 345-454 (NVSSQQFRSV…TRNGFQEHEV (110 aa)) are cytoplasmic. Ser397 is modified (phosphoserine). The interval 415–454 (HSEAKPESKPQELSCESPEPNSERKPANPATRNGFQEHEV) is disordered.

It belongs to the G-protein coupled receptor 1 family. Interacts with HTR1A. Interacts with GALR1. As to expression, detected in liver, kidney, abomasum, uterus, small intestine and colon.

Its subcellular location is the cell membrane. Functionally, zinc-sensing receptor that can sense changes in extracellular Zn(2+), mediate Zn(2+) signal transmission, and participates in the regulation of numerous physiological processes including glucose homeostasis regulation, gastrointestinal mobility, hormone secretion and cell death. Activation by Zn(2+) in keratinocytes increases the intracellular concentration of Ca(2+) and activates the ERK/MAPK and PI3K/AKT signaling pathways leading to epithelial repair. Plays an essential role in normal wound healing by inducing the production of cytokines including the major inflammatory cytokine IL6 via the PKC/MAPK/CEBPB pathway. Regulates adipose tissue metabolism, especially lipolysis, and regulates the function of lipases, such as hormone-sensitive lipase and adipose triglyceride lipase. Plays a role in the inhibition of cell death and protects against oxidative, endoplasmic reticulum and mitochondrial stress by inducing secretion of the cytoprotective pigment epithelium-derived growth factor (PEDF) and probably other protective transcripts in a GNA13/RHOA/SRE-dependent manner. Forms dynamic heteroreceptor complexes with HTR1A and GALR1 depending on cell type or specific physiological states, resulting in signaling diversity: HTR1A-GPR39 shows additive increase in signaling along the serum response element (SRE) and NF-kappa-B pathways while GALR1 acts as an antagonist blocking SRE. The sequence is that of G-protein coupled receptor 39 (GPR39) from Bos taurus (Bovine).